Here is a 270-residue protein sequence, read N- to C-terminus: MGNTSSERAALERQAGHKTPRRDSSGGAKDGDRPKILMDSPEDADIFHSEEIKAPEKEEFLAWQHDLEANDKAPAQARPTVFRWTGGGKEVYLSGSFNNWSKLPLTRSQNNFVAILDLPEGEHQYKFFVDGQWTHDPSEPIVTSQLGTVNNIIQVKKTDFEVFDALMVDSQKCSDVSELSSSPPGPYHQEPYMSKPEERFKAPPILPPHLLQVILNKDTGISCDPALLPEPNHVMLNHLYALSIKDGVMVLSATHRYKKKYVTTLLYKPI.

A disordered region spans residues 1-44 (MGNTSSERAALERQAGHKTPRRDSSGGAKDGDRPKILMDSPEDA). G2 carries the N-myristoyl glycine lipid modification. T4 carries the phosphothreonine modification. 2 positions are modified to phosphoserine: S5 and S6. A compositionally biased stretch (basic and acidic residues) spans 9–36 (AALERQAGHKTPRRDSSGGAKDGDRPKI). T19 carries the phosphothreonine modification. 2 positions are modified to phosphoserine; by autocatalysis: S24 and S25. 3 positions are modified to phosphoserine: S40, S96, and S101. The interval 68 to 163 (EANDKAPAQA…QVKKTDFEVF (96 aa)) is glycogen-binding domain. S108 carries the post-translational modification Phosphoserine; by autocatalysis. T148 is subject to Phosphothreonine. At S182 the chain carries Phosphoserine. At K201 the chain carries N6-succinyllysine.

This sequence belongs to the 5'-AMP-activated protein kinase beta subunit family. In terms of assembly, AMPK is a heterotrimer of an alpha catalytic subunit (PRKAA1 or PRKAA2), a beta (PRKAB1 or PRKAB2) and a gamma non-catalytic subunits (PRKAG1, PRKAG2 or PRKAG3). Interacts with FNIP1 and FNIP2. Post-translationally, phosphorylated when associated with the catalytic subunit (PRKAA1 or PRKAA2). Phosphorylated by ULK1; leading to negatively regulate AMPK activity and suggesting the existence of a regulatory feedback loop between ULK1 and AMPK.

Functionally, non-catalytic subunit of AMP-activated protein kinase (AMPK), an energy sensor protein kinase that plays a key role in regulating cellular energy metabolism. In response to reduction of intracellular ATP levels, AMPK activates energy-producing pathways and inhibits energy-consuming processes: inhibits protein, carbohydrate and lipid biosynthesis, as well as cell growth and proliferation. AMPK acts via direct phosphorylation of metabolic enzymes, and by longer-term effects via phosphorylation of transcription regulators. Also acts as a regulator of cellular polarity by remodeling the actin cytoskeleton; probably by indirectly activating myosin. Beta non-catalytic subunit acts as a scaffold on which the AMPK complex assembles, via its C-terminus that bridges alpha (PRKAA1 or PRKAA2) and gamma subunits (PRKAG1, PRKAG2 or PRKAG3). The sequence is that of 5'-AMP-activated protein kinase subunit beta-1 (Prkab1) from Mus musculus (Mouse).